Consider the following 406-residue polypeptide: Glutamyl-tRNA reductase (406 aa).

Residues 51–54, Ser101, 106–108, and Gln112 contribute to the substrate site; these read TCNR and ESE. Cys52 functions as the Nucleophile in the catalytic mechanism. 180 to 185 provides a ligand contact to NADP(+); the sequence is GAGSIG.

This sequence belongs to the glutamyl-tRNA reductase family. In terms of assembly, homodimer.

The catalysed reaction is (S)-4-amino-5-oxopentanoate + tRNA(Glu) + NADP(+) = L-glutamyl-tRNA(Glu) + NADPH + H(+). It participates in porphyrin-containing compound metabolism; protoporphyrin-IX biosynthesis; 5-aminolevulinate from L-glutamyl-tRNA(Glu): step 1/2. Its function is as follows. Catalyzes the NADPH-dependent reduction of glutamyl-tRNA(Glu) to glutamate 1-semialdehyde (GSA). This chain is Glutamyl-tRNA reductase, found in Caldivirga maquilingensis (strain ATCC 700844 / DSM 13496 / JCM 10307 / IC-167).